Here is a 381-residue protein sequence, read N- to C-terminus: Cobalt-precorrin-5B C(1)-methyltransferase (381 aa).

This sequence belongs to the CbiD family.

The catalysed reaction is Co-precorrin-5B + S-adenosyl-L-methionine = Co-precorrin-6A + S-adenosyl-L-homocysteine. It functions in the pathway cofactor biosynthesis; adenosylcobalamin biosynthesis; cob(II)yrinate a,c-diamide from sirohydrochlorin (anaerobic route): step 6/10. Catalyzes the methylation of C-1 in cobalt-precorrin-5B to form cobalt-precorrin-6A. The sequence is that of Cobalt-precorrin-5B C(1)-methyltransferase from Clostridium botulinum (strain Alaska E43 / Type E3).